Here is a 327-residue protein sequence, read N- to C-terminus: Ribonucleoside-diphosphate reductase small chain (327 aa).

Positions 70, 101, and 104 each coordinate Fe cation. Residue Tyr-108 is part of the active site. Fe cation contacts are provided by Glu-164, Glu-198, and His-201.

It belongs to the ribonucleoside diphosphate reductase small chain family. In terms of assembly, heterotetramer composed of a homodimer of the large subunit (R1) and a homodimer of the small subunit (R2). Larger multisubunit protein complex are also active, composed of (R1)n(R2)n. Fe cation is required as a cofactor.

The catalysed reaction is a 2'-deoxyribonucleoside 5'-diphosphate + [thioredoxin]-disulfide + H2O = a ribonucleoside 5'-diphosphate + [thioredoxin]-dithiol. In terms of biological role, ribonucleoside-diphosphate reductase holoenzyme provides the precursors necessary for viral DNA synthesis. Allows virus growth in non-dividing cells. Catalyzes the biosynthesis of deoxyribonucleotides from the corresponding ribonucleotides. This is Ribonucleoside-diphosphate reductase small chain from Ornithodoros (relapsing fever ticks).